A 265-amino-acid chain; its full sequence is Protein N-terminal and lysine N-methyltransferase EFM7 (265 aa).

S-adenosyl-L-methionine is bound by residues W55, 81–83, D103, W141, and A169; that span reads GAA.

The protein belongs to the class I-like SAM-binding methyltransferase superfamily. EFM7 family.

The protein resides in the cytoplasm. In terms of biological role, S-adenosyl-L-methionine-dependent protein methyltransferase that trimethylates the N-terminal glycine 'Gly-2' of elongation factor 1-alpha, before also catalyzing the mono- and dimethylation of 'Lys-3'. The protein is Protein N-terminal and lysine N-methyltransferase EFM7 of Gibberella zeae (strain ATCC MYA-4620 / CBS 123657 / FGSC 9075 / NRRL 31084 / PH-1) (Wheat head blight fungus).